Here is a 347-residue protein sequence, read N- to C-terminus: Histone deacetylase 11 (347 aa).

Residues 14 to 318 are histone deacetylase; sequence KRWPIVYSPR…ARIIADSILN (305 aa). The active site involves histidine 143.

This sequence belongs to the histone deacetylase family. In terms of assembly, interacts with HDAC6.

It is found in the nucleus. The enzyme catalyses N(6)-acetyl-L-lysyl-[histone] + H2O = L-lysyl-[histone] + acetate. Functionally, responsible for the deacetylation of lysine residues on the N-terminal part of the core histones (H2A, H2B, H3 and H4). Histone deacetylation gives a tag for epigenetic repression and plays an important role in transcriptional regulation, cell cycle progression and developmental events. Histone deacetylases act via the formation of large multiprotein complexes. This chain is Histone deacetylase 11 (Hdac11), found in Mus musculus (Mouse).